The following is a 328-amino-acid chain: Sin3 histone deacetylase corepressor complex component SDS3 (328 aa).

The span at 1 to 16 shows a compositional bias: low complexity; that stretch reads MSAAGLLAPAPAQAGA. A disordered region spans residues 1–65; sequence MSAAGLLAPA…DLAKHDEEDY (65 aa). Serine 2 carries the post-translational modification N-acetylserine. The segment at 2-170 is mediates interaction with USP17L2; that stretch reads SAAGLLAPAP…IENEKLTMEL (169 aa). 2 stretches are compositionally biased toward acidic residues: residues 23–37 and 45–54; these read YPEEDEELESAEEDE and SDEDTEDASE. 2 positions are modified to phosphoserine: serine 32 and serine 45. Threonine 49 is subject to Phosphothreonine. At serine 53 the chain carries Phosphoserine. Positions 56-65 are enriched in basic and acidic residues; the sequence is DLAKHDEEDY. A coiled-coil region spans residues 66 to 171; it reads VEMKEQMYQD…ENEKLTMELT (106 aa). Glycyl lysine isopeptide (Lys-Gly) (interchain with G-Cter in SUMO2) cross-links involve residues lysine 69, lysine 178, and lysine 201. Positions 188–226 are sin3 interaction domain (SID); that stretch reads RPNDPVPIPDKRRKPAPAQLNYLLTDEQIMEDLRTLNKL. The disordered stretch occupies residues 226–252; it reads LKSPKRPASPSSPEHLPATPAESPAQR. Residues serine 228, serine 234, and serine 237 each carry the phosphoserine modification. Phosphothreonine is present on threonine 244.

This sequence belongs to the SDS3 family. In terms of assembly, interacts with HCFC1. Homodimer. Component of the SIN3 histone deacetylase (HDAC) corepressor complex. Interacts with SIN3A. Interaction with SIN3B enhances the interaction between SIN3B and HDAC1 to form a complex. Component of a mSin3A corepressor complex that contains SIN3A, SAP130, SUDS3/SAP45, ARID4B/SAP180, HDAC1 and HDAC2. Interacts with USP17L2; the interaction is direct. Interacts with FOXK2. Polyubiquitinated. 'Lys-63'-polyubiquitinated SUDS3 positively regulates histone deacetylation. Regulated through deubiquitination by USP17L2/USP17 that cleaves 'Lys-63'-linked ubiquitin chains.

It is found in the nucleus. In terms of biological role, regulatory protein which represses transcription and augments histone deacetylase activity of HDAC1. May have a potential role in tumor suppressor pathways through regulation of apoptosis. May function in the assembly and/or enzymatic activity of the mSin3A corepressor complex or in mediating interactions between the complex and other regulatory complexes. The polypeptide is Sin3 histone deacetylase corepressor complex component SDS3 (SUDS3) (Pongo abelii (Sumatran orangutan)).